A 186-amino-acid chain; its full sequence is Large ribosomal subunit protein uL5c (186 aa).

Belongs to the universal ribosomal protein uL5 family. As to quaternary structure, part of the 50S ribosomal subunit; contacts the 5S rRNA.

Its subcellular location is the plastid. The protein resides in the chloroplast. Functionally, binds 5S rRNA, forms part of the central protuberance of the 50S subunit. In Pleurastrum terricola (Filamentous green alga), this protein is Large ribosomal subunit protein uL5c (rpl5).